We begin with the raw amino-acid sequence, 138 residues long: Gonadotropin subunit beta-2 (138 aa).

Residues 1–21 (MPASSYFLLFFFMNFFSPAQS) form the signal peptide. 6 cysteine pairs are disulfide-bonded: C27–C75, C41–C90, C44–C128, C52–C106, C56–C108, and C111–C118. The N-linked (GlcNAc...) asparagine glycan is linked to N31.

It belongs to the glycoprotein hormones subunit beta family. As to quaternary structure, heterodimer of an alpha and a beta chain.

The protein resides in the secreted. Functionally, involved in gametogenesis and steroidogenesis. This is Gonadotropin subunit beta-2 (cgbb) from Clarias gariepinus (North African catfish).